Reading from the N-terminus, the 310-residue chain is Ribosomal RNA small subunit methyltransferase H (310 aa).

S-adenosyl-L-methionine is bound by residues 32–34, Asp52, Phe79, Asp100, and Gln107; that span reads GGH.

Belongs to the methyltransferase superfamily. RsmH family.

It is found in the cytoplasm. The enzyme catalyses cytidine(1402) in 16S rRNA + S-adenosyl-L-methionine = N(4)-methylcytidine(1402) in 16S rRNA + S-adenosyl-L-homocysteine + H(+). Functionally, specifically methylates the N4 position of cytidine in position 1402 (C1402) of 16S rRNA. The sequence is that of Ribosomal RNA small subunit methyltransferase H from Geobacillus thermodenitrificans (strain NG80-2).